The chain runs to 348 residues: Tetraacyldisaccharide 4'-kinase (348 aa).

Position 50–57 (50–57 (TMGGTGKT)) interacts with ATP.

It belongs to the LpxK family.

The enzyme catalyses a lipid A disaccharide + ATP = a lipid IVA + ADP + H(+). Its pathway is glycolipid biosynthesis; lipid IV(A) biosynthesis; lipid IV(A) from (3R)-3-hydroxytetradecanoyl-[acyl-carrier-protein] and UDP-N-acetyl-alpha-D-glucosamine: step 6/6. Functionally, transfers the gamma-phosphate of ATP to the 4'-position of a tetraacyldisaccharide 1-phosphate intermediate (termed DS-1-P) to form tetraacyldisaccharide 1,4'-bis-phosphate (lipid IVA). The chain is Tetraacyldisaccharide 4'-kinase from Desulfotalea psychrophila (strain LSv54 / DSM 12343).